Reading from the N-terminus, the 33-residue chain is Protamine TP17 (33 aa).

The tract at residues 1-33 (MPRRRRSSSRPVRRRRRPRVSRRRRRRGRRRRR) is disordered.

As to expression, testis.

Its subcellular location is the nucleus. The protein localises to the chromosome. In terms of biological role, protamines substitute for histones in the chromatin of sperm during the haploid phase of spermatogenesis. They compact sperm DNA into a highly condensed, stable and inactive complex. The protein is Protamine TP17 of Oncorhynchus mykiss (Rainbow trout).